The following is a 240-amino-acid chain: Membrane-spanning 4-domains subfamily A member 15 (240 aa).

A run of 4 helical transmembrane segments spans residues 73-93 (VLGT…SVLL), 100-120 (VGIF…FIIS), 144-164 (ILSV…FGVT), and 173-193 (LAVL…AMHF).

The protein belongs to the MS4A family.

It localises to the membrane. Its function is as follows. May be involved in signal transduction as a component of a multimeric receptor complex. The protein is Membrane-spanning 4-domains subfamily A member 15 (MS4A15) of Homo sapiens (Human).